We begin with the raw amino-acid sequence, 591 residues long: Metalloendopeptidase OPG085 (591 aa).

H41 provides a ligand contact to Zn(2+). Residue E44 is part of the active site. H45 is a binding site for Zn(2+).

Belongs to the peptidase M44 family. The cofactor is Zn(2+). Post-translationally, undergoes proteolytic processing during the course of infection. May be cleaved into 46 kDa and 22 kDa products (Potential).

It localises to the virion. Functionally, probably involved in maturation of some viral proteins by processing them preferentially at Ala-Gly-|-Ser/Thr/Lys motifs. Does not seem to be responsible for the cleavage of major core proteins. This chain is Metalloendopeptidase OPG085 (OPG085), found in Homo sapiens (Human).